Here is an 85-residue protein sequence, read N- to C-terminus: UPF0512 protein R (85 aa).

It belongs to the UPF0512 family.

The chain is UPF0512 protein R from Dictyostelium discoideum (Social amoeba).